Reading from the N-terminus, the 201-residue chain is Guanylate kinase (201 aa).

A Guanylate kinase-like domain is found at 7–186 (GVLLVLSSPS…SVEEISSILN (180 aa)). An ATP-binding site is contributed by 14–21 (SPSGAGKT).

This sequence belongs to the guanylate kinase family.

It localises to the cytoplasm. It catalyses the reaction GMP + ATP = GDP + ADP. Functionally, essential for recycling GMP and indirectly, cGMP. This is Guanylate kinase from Wolbachia pipientis wMel.